Here is a 353-residue protein sequence, read N- to C-terminus: Histidinol-phosphate aminotransferase (353 aa).

K218 is modified (N6-(pyridoxal phosphate)lysine).

This sequence belongs to the class-II pyridoxal-phosphate-dependent aminotransferase family. Histidinol-phosphate aminotransferase subfamily. As to quaternary structure, homodimer. It depends on pyridoxal 5'-phosphate as a cofactor.

The enzyme catalyses L-histidinol phosphate + 2-oxoglutarate = 3-(imidazol-4-yl)-2-oxopropyl phosphate + L-glutamate. Its pathway is amino-acid biosynthesis; L-histidine biosynthesis; L-histidine from 5-phospho-alpha-D-ribose 1-diphosphate: step 7/9. The sequence is that of Histidinol-phosphate aminotransferase from Synechococcus sp. (strain JA-3-3Ab) (Cyanobacteria bacterium Yellowstone A-Prime).